A 162-amino-acid polypeptide reads, in one-letter code: F protein (162 aa).

The segment at 1 to 23 is disordered; the sequence is MSTNPKPQKKKTNVTPTVAHRTS. The segment covering 13–23 has biased composition (polar residues); it reads NVTPTVAHRTS.

The protein resides in the host cytoplasm. It localises to the host perinuclear region. The sequence is that of F protein from Hepatitis C virus genotype 1a (isolate 1) (HCV).